Here is a 142-residue protein sequence, read N- to C-terminus: Small ribosomal subunit protein bS18m (142 aa).

Belongs to the bacterial ribosomal protein bS18 family. Component of the mitochondrial small ribosomal subunit (mt-SSU). Mature mammalian 55S mitochondrial ribosomes consist of a small (28S) and a large (39S) subunit. The 28S small subunit contains a 12S ribosomal RNA (12S mt-rRNA) and 30 different proteins. The 39S large subunit contains a 16S rRNA (16S mt-rRNA), a copy of mitochondrial valine transfer RNA (mt-tRNA(Val)), which plays an integral structural role, and 52 different proteins. bS18m has a zinc binding site.

The protein localises to the mitochondrion. The protein is Small ribosomal subunit protein bS18m (MRPS18C) of Homo sapiens (Human).